The sequence spans 413 residues: Docking protein 2 (413 aa).

Positions 4 to 114 constitute a PH domain; that stretch reads VVVKQGFLYL…WIQAICLLAF (111 aa). Residues 147-252 form the IRS-type PTB domain; the sequence is PQKEFAVTVR…SAQKNAAPPG (106 aa). A disordered region spans residues 247–292; sequence NAAPPGPQTQPVPVPAVLPRPESPYARPHDSLPPPSPTVPVPTPRQ. Pro residues predominate over residues 250 to 268; it reads PPGPQTQPVPVPAVLPRPE. Y271 bears the Phosphotyrosine mark. Residues 277–289 are compositionally biased toward pro residues; the sequence is SLPPPSPTVPVPT. Y300 and Y346 each carry phosphotyrosine. A compositionally biased stretch (basic and acidic residues) spans 362 to 381; sequence QEPRGEAWRRQATADRDSSG. Residues 362–383 are disordered; it reads QEPRGEAWRRQATADRDSSGLK.

The protein belongs to the DOK family. Type A subfamily. In terms of assembly, interacts with phosphorylated RASGAP and EGFR. Interacts with RET and NCK. Interacts (via PH domain) with TEK/TIE2 (tyrosine phosphorylated). Post-translationally, on immunoreceptor stimulation, phosphorylated on C-terminal tyrosine residues. Phosphorylation on Tyr-346 is required for binding to the SH2 domain of NCK. Phosphorylation on both Tyr-271 and Tyr-300 is required for interaction with RASGAP. Phosphorylated on tyrosine residues by TEK/TIE2.

Functionally, DOK proteins are enzymatically inert adaptor or scaffolding proteins. They provide a docking platform for the assembly of multimolecular signaling complexes. DOK2 may modulate the cellular proliferation induced by IL-4, as well as IL-2 and IL-3. May be involved in modulating Bcr-Abl signaling. Attenuates EGF-stimulated MAP kinase activation. The chain is Docking protein 2 (DOK2) from Bos taurus (Bovine).